Reading from the N-terminus, the 414-residue chain is Putative F-box/kelch-repeat protein At2g29800 (414 aa).

The tract at residues 1 to 61 (MASISETSDD…EVENVPPIPR (61 aa)) is disordered. Residues 20–35 (KPEEPHKNPQEEKENQ) are compositionally biased toward basic and acidic residues. Positions 40-54 (NEADEEDDHQDEEVE) are enriched in acidic residues. The F-box domain maps to 58-105 (PIPRKIPPVLIENTIAPLRRCHYPKLSLLSNAFRQVISSEDLFQVRSL). Kelch repeat units follow at residues 163–211 (KIYV…VIDG), 212–258 (RIYV…IVHV), 263–302 (KIYIMDGDYCFAYDPRRRRWETWGPESAQRSYWHLSSCVV), and 305–349 (LLYA…SKMA).

This is Putative F-box/kelch-repeat protein At2g29800 from Arabidopsis thaliana (Mouse-ear cress).